A 219-amino-acid polypeptide reads, in one-letter code: UPF0502 protein Ppro_2903 (219 aa).

Belongs to the UPF0502 family.

This is UPF0502 protein Ppro_2903 from Pelobacter propionicus (strain DSM 2379 / NBRC 103807 / OttBd1).